A 393-amino-acid chain; its full sequence is Sialyltransferase-like protein 1 (393 aa).

Residues 1–8 (MKRPLRRP) are Cytoplasmic-facing. A helical; Signal-anchor for type II membrane protein membrane pass occupies residues 9 to 27 (FAVLLFVVLCAAASFPSVL). The Lumenal portion of the chain corresponds to 28–393 (RRSVGPAPVL…IAVPPVVFYH (366 aa)). N49, N212, and N258 each carry an N-linked (GlcNAc...) asparagine glycan.

Belongs to the glycosyltransferase 29 family. In terms of tissue distribution, expressed in leaves and stalks. Expressed at low levels in roots.

The protein resides in the golgi apparatus membrane. In terms of biological role, possesses sialyltransferase-like activity in vitro. Transfers sialic acid to the oligosaccharide Gal-beta-1,3-GalNAc and to glycoproteins such as asialofetuin, alpha-1-acid glycoprotein (NeuAc-alpha-2,3-Gal-beta-1,3-GalNAc-) and andasialo-alpha-1-acid glycoprotein. The transferred sialic acid is linked to galactose of Gal-beta-1,3-GalNAc through alpha-2,6-linkage. In Oryza sativa subsp. japonica (Rice), this protein is Sialyltransferase-like protein 1.